A 162-amino-acid polypeptide reads, in one-letter code: Cytochrome c-type biogenesis protein CcmE (162 aa).

The Cytoplasmic segment spans residues 1–8; that stretch reads MNPRRKKR. Residues 9-29 form a helical; Signal-anchor for type II membrane protein membrane-spanning segment; it reads LTLAVALIGGVAAITSLLLYA. Topologically, residues 30–162 are periplasmic; sequence LNSNLNLFYT…YSQQKAPDTK (133 aa). Heme is bound by residues H131 and Y135. A disordered region spans residues 142 to 162; that stretch reads EAMGQKHEKLDYSQQKAPDTK. The span at 153–162 shows a compositional bias: polar residues; it reads YSQQKAPDTK.

It belongs to the CcmE/CycJ family.

Its subcellular location is the cell inner membrane. In terms of biological role, heme chaperone required for the biogenesis of c-type cytochromes. Transiently binds heme delivered by CcmC and transfers the heme to apo-cytochromes in a process facilitated by CcmF and CcmH. This chain is Cytochrome c-type biogenesis protein CcmE, found in Shewanella baltica (strain OS223).